The following is a 157-amino-acid chain: SsrA-binding protein (157 aa).

A disordered region spans residues 133–157 (LHDKRESEKKRDWGREKGRLLRARG). A compositionally biased stretch (basic and acidic residues) spans 135–151 (DKRESEKKRDWGREKGR).

This sequence belongs to the SmpB family.

Its subcellular location is the cytoplasm. Functionally, required for rescue of stalled ribosomes mediated by trans-translation. Binds to transfer-messenger RNA (tmRNA), required for stable association of tmRNA with ribosomes. tmRNA and SmpB together mimic tRNA shape, replacing the anticodon stem-loop with SmpB. tmRNA is encoded by the ssrA gene; the 2 termini fold to resemble tRNA(Ala) and it encodes a 'tag peptide', a short internal open reading frame. During trans-translation Ala-aminoacylated tmRNA acts like a tRNA, entering the A-site of stalled ribosomes, displacing the stalled mRNA. The ribosome then switches to translate the ORF on the tmRNA; the nascent peptide is terminated with the 'tag peptide' encoded by the tmRNA and targeted for degradation. The ribosome is freed to recommence translation, which seems to be the essential function of trans-translation. This is SsrA-binding protein from Nitrobacter winogradskyi (strain ATCC 25391 / DSM 10237 / CIP 104748 / NCIMB 11846 / Nb-255).